The following is a 73-amino-acid chain: Serine rich endogenous peptide 1 (73 aa).

The signal sequence occupies residues 1 to 28 (MGMSGSSGLVHVLMLLLLLSILFHHTES). Residues 48–73 (YKPNTAVETPPSRSRRGGGGQNTGAD) form a disordered region. The SCOOP motif motif lies at 53–67 (AVETPPSRSRRGGGG). The SxS motif essential for MIK2 binding motif lies at 59-61 (SRS). The segment covering 64–73 (GGGGQNTGAD) has biased composition (gly residues).

The protein belongs to the serine rich endogenous peptide (SCOOP) phytocytokine family. Interacts with MIK2 (via extracellular leucine-rich repeat domain); this interaction triggers the formation of complex between MIK2 and the BAK1/SERK3 and SERK4 coreceptors, and subsequent BAK1 activation by phosphorylation. Mostly expressed in leaves and flowers, and, to a lower extent, in seedlings shoots.

The protein resides in the cell membrane. The protein localises to the secreted. Its subcellular location is the extracellular space. It localises to the apoplast. Brassicaceae-specific phytocytokine (plant endogenous peptide released into the apoplast) perceived by MIK2 in a BAK1/SERK3 and SERK4 coreceptors-dependent manner, that modulates various physiological and antimicrobial processes including growth prevention and reactive oxygen species (ROS) response regulation. The polypeptide is Serine rich endogenous peptide 1 (Arabidopsis thaliana (Mouse-ear cress)).